We begin with the raw amino-acid sequence, 60 residues long: Large ribosomal subunit protein bL32 (60 aa).

A disordered region spans residues M1–D60. Residues R49–D60 show a composition bias toward basic residues.

Belongs to the bacterial ribosomal protein bL32 family.

The protein is Large ribosomal subunit protein bL32 of Nitrosomonas eutropha (strain DSM 101675 / C91 / Nm57).